The primary structure comprises 422 residues: UPF0597 protein Kole_0595 (422 aa).

It belongs to the UPF0597 family.

This chain is UPF0597 protein Kole_0595, found in Kosmotoga olearia (strain ATCC BAA-1733 / DSM 21960 / TBF 19.5.1).